The following is an 83-amino-acid chain: Acid shock protein (83 aa).

Positions 1 to 21 (MKKVLALVVAAAMGLSSAAFA) are cleaved as a signal peptide. A compositionally biased stretch (low complexity) spans 22–40 (AETATPAKTATPAKTTQNT). A propeptide spanning residues 22-56 (AETATPAKTATPAKTTQNTQHHKKQHKKTVEQKAQ) is cleaved from the precursor. Residues 22–83 (AETATPAKTA…TSKTTSQPAA (62 aa)) form a disordered region. Basic residues predominate over residues 57–70 (AAKKHQKKDGKKAP). The segment covering 71-83 (AKSTSKTTSQPAA) has biased composition (low complexity).

This sequence belongs to the Asr family. In terms of processing, proteolytic processing gives rise to the active protein.

The protein localises to the periplasm. Functionally, required for growth and/or survival at acidic conditions. The protein is Acid shock protein of Salmonella heidelberg (strain SL476).